The sequence spans 90 residues: uncharacterized protein (90 aa).

The chain crosses the membrane as a helical span at residues 32–52; sequence IIINLIPLVLLFAFFCPCIYF.

It is found in the membrane. This is an uncharacterized protein from Schizosaccharomyces pombe (strain 972 / ATCC 24843) (Fission yeast).